Here is a 336-residue protein sequence, read N- to C-terminus: tRNA N6-adenosine threonylcarbamoyltransferase (336 aa).

Fe cation is bound by residues His-114 and His-118. Substrate-binding positions include 136-140, Asp-169, Gly-182, Asp-186, and Asn-275; that span reads LVSGG. Asp-302 provides a ligand contact to Fe cation.

It belongs to the KAE1 / TsaD family. Fe(2+) is required as a cofactor.

It localises to the cytoplasm. It carries out the reaction L-threonylcarbamoyladenylate + adenosine(37) in tRNA = N(6)-L-threonylcarbamoyladenosine(37) in tRNA + AMP + H(+). In terms of biological role, required for the formation of a threonylcarbamoyl group on adenosine at position 37 (t(6)A37) in tRNAs that read codons beginning with adenine. Is involved in the transfer of the threonylcarbamoyl moiety of threonylcarbamoyl-AMP (TC-AMP) to the N6 group of A37, together with TsaE and TsaB. TsaD likely plays a direct catalytic role in this reaction. The chain is tRNA N6-adenosine threonylcarbamoyltransferase from Streptococcus agalactiae serotype Ia (strain ATCC 27591 / A909 / CDC SS700).